The chain runs to 344 residues: Uroporphyrinogen decarboxylase (344 aa).

Residues 27 to 31 (RQAGR), Phe46, Asp76, Tyr151, Ser206, and His319 contribute to the substrate site.

It belongs to the uroporphyrinogen decarboxylase family. Homodimer.

The protein resides in the cytoplasm. It carries out the reaction uroporphyrinogen III + 4 H(+) = coproporphyrinogen III + 4 CO2. The protein operates within porphyrin-containing compound metabolism; protoporphyrin-IX biosynthesis; coproporphyrinogen-III from 5-aminolevulinate: step 4/4. Its function is as follows. Catalyzes the decarboxylation of four acetate groups of uroporphyrinogen-III to yield coproporphyrinogen-III. This is Uroporphyrinogen decarboxylase from Halalkalibacterium halodurans (strain ATCC BAA-125 / DSM 18197 / FERM 7344 / JCM 9153 / C-125) (Bacillus halodurans).